Consider the following 240-residue polypeptide: Protein GrpE (240 aa).

Residues 1–13 (MTDNQRQSTTDGQ) show a composition bias toward polar residues. Positions 1–89 (MTDNQRQSTT…DAEQKAEEHW (89 aa)) are disordered. Residues 20-38 (AQATAEAAEQTQATQASAA) show a composition bias toward low complexity. Positions 65–89 (EALRQRVEELEKALADAEQKAEEHW) are enriched in basic and acidic residues.

The protein belongs to the GrpE family. Homodimer.

The protein resides in the cytoplasm. Functionally, participates actively in the response to hyperosmotic and heat shock by preventing the aggregation of stress-denatured proteins, in association with DnaK and GrpE. It is the nucleotide exchange factor for DnaK and may function as a thermosensor. Unfolded proteins bind initially to DnaJ; upon interaction with the DnaJ-bound protein, DnaK hydrolyzes its bound ATP, resulting in the formation of a stable complex. GrpE releases ADP from DnaK; ATP binding to DnaK triggers the release of the substrate protein, thus completing the reaction cycle. Several rounds of ATP-dependent interactions between DnaJ, DnaK and GrpE are required for fully efficient folding. This Halorhodospira halophila (strain DSM 244 / SL1) (Ectothiorhodospira halophila (strain DSM 244 / SL1)) protein is Protein GrpE.